We begin with the raw amino-acid sequence, 864 residues long: Mitochondrial 15S rRNA processing factor CCM1 (864 aa).

Residues M1–R76 constitute a mitochondrion transit peptide. PPR repeat units follow at residues N319–H353 and D356–P390.

This sequence belongs to the CCM1 family. In terms of assembly, binds to mitochondrial small subunit 15S rRNA.

The protein resides in the mitochondrion. Regulates mitochondrial small subunit maturation by controlling 15S rRNA 5'-end processing. Localizes to the 5' precursor of the 15S rRNA in a position that is subsequently occupied by mS47 in the mature yeast mtSSU. Uses structure and sequence-specific RNA recognition, binding to a single-stranded region of the precursor and specifically recognizing bases -6 to -1. The exchange of Ccm1 for mS47 is coupled to the irreversible removal of precursor rRNA that is accompanied by conformational changes of the mitoribosomal proteins uS5m and mS26. These conformational changes signal completion of 5'-end rRNA processing through protection of the mature 5'-end of the 15S rRNA and stabilization of mS47. The removal of the 5' precursor together with the dissociation of Ccm1 may be catalyzed by the 5'-3' exoribonuclease Pet127. Involved in the specific removal of group I introns in mitochondrial encoded transcripts. The sequence is that of Mitochondrial 15S rRNA processing factor CCM1 (CCM1) from Saccharomyces cerevisiae (strain Lalvin EC1118 / Prise de mousse) (Baker's yeast).